The primary structure comprises 328 residues: Ketol-acid reductoisomerase (NADP(+)) (328 aa).

The 181-residue stretch at 2–182 (AKIYTDREAS…GATRAGVIET (181 aa)) folds into the KARI N-terminal Rossmann domain. NADP(+) is bound by residues 25-28 (YGIQ), R48, S53, and 83-86 (DMEQ). H108 is an active-site residue. Residue G134 coordinates NADP(+). Residues 183–328 (TFAEETETDL…EEMRKLLFGP (146 aa)) enclose the KARI C-terminal knotted domain. 4 residues coordinate Mg(2+): D191, E195, E227, and E231. Substrate is bound at residue S252.

This sequence belongs to the ketol-acid reductoisomerase family. The cofactor is Mg(2+).

It catalyses the reaction (2R)-2,3-dihydroxy-3-methylbutanoate + NADP(+) = (2S)-2-acetolactate + NADPH + H(+). The enzyme catalyses (2R,3R)-2,3-dihydroxy-3-methylpentanoate + NADP(+) = (S)-2-ethyl-2-hydroxy-3-oxobutanoate + NADPH + H(+). The protein operates within amino-acid biosynthesis; L-isoleucine biosynthesis; L-isoleucine from 2-oxobutanoate: step 2/4. Its pathway is amino-acid biosynthesis; L-valine biosynthesis; L-valine from pyruvate: step 2/4. Functionally, involved in the biosynthesis of branched-chain amino acids (BCAA). Catalyzes an alkyl-migration followed by a ketol-acid reduction of (S)-2-acetolactate (S2AL) to yield (R)-2,3-dihydroxy-isovalerate. In the isomerase reaction, S2AL is rearranged via a Mg-dependent methyl migration to produce 3-hydroxy-3-methyl-2-ketobutyrate (HMKB). In the reductase reaction, this 2-ketoacid undergoes a metal-dependent reduction by NADPH to yield (R)-2,3-dihydroxy-isovalerate. The sequence is that of Ketol-acid reductoisomerase (NADP(+)) from Pyrobaculum aerophilum (strain ATCC 51768 / DSM 7523 / JCM 9630 / CIP 104966 / NBRC 100827 / IM2).